The primary structure comprises 79 residues: Small ribosomal subunit protein bS16 (79 aa).

This sequence belongs to the bacterial ribosomal protein bS16 family.

This Nitratidesulfovibrio vulgaris (strain DSM 19637 / Miyazaki F) (Desulfovibrio vulgaris) protein is Small ribosomal subunit protein bS16.